Consider the following 384-residue polypeptide: MAP kinase-activated protein kinase 3 (384 aa).

At M1 the chain carries N-acetylmethionine. A disordered region spans residues 1 to 33 (MDGETAGEKGSLVPQPGALGAPALGGAPAPGVR). A compositionally biased stretch (low complexity) spans 14 to 31 (PQPGALGAPALGGAPAPG). Residues 46–306 (QLSKQVLGLG…IMQFMNHPWI (261 aa)) enclose the Protein kinase domain. Residues 52-60 (LGLGVNGKV) and K75 contribute to the ATP site. Residue D168 is the Proton acceptor of the active site. A Phosphothreonine; by MAPK14 modification is found at T203. A Phosphoserine; by MAPK14 modification is found at S253. The residue at position 309 (S309) is a Phosphoserine; by autocatalysis. Residues 309 to 345 (SMEVPQTPLHTARVLEEDKDHWDDVKEEMTSALATMR) are autoinhibitory helix. T315 carries the post-translational modification Phosphothreonine; by MAPK14. A Nuclear export signal (NES) motif is present at residues 337–346 (MTSALATMRV). Positions 347-371 (DYDQVKIKDLKTSNNRLLNKRRKKQ) are p38 MAPK-binding site. 2 consecutive short sequence motifs (bipartite nuclear localization signal) follow at residues 352 to 355 (KIKD) and 366 to 370 (KRRKK). A disordered region spans residues 359–384 (SNNRLLNKRRKKQGGSSSASPGCNNQ). Residues 372-384 (GGSSSASPGCNNQ) show a composition bias toward polar residues.

The protein belongs to the protein kinase superfamily. CAMK Ser/Thr protein kinase family. In terms of assembly, heterodimer with p38-alpha/MAPK14. The heterodimer with p38-alpha/MAPK14 forms a stable complex: molecules are positioned 'face to face' so that the ATP-binding sites of both kinases are at the heterodimer interface. Interacts with TCF3 and with polycomb proteins, such as PCH2 and BMI1/PCGF4. Phosphorylated and activated by MAPK1/ERK2 and MAPK3/ERK1. Phosphorylated and activated by MAP kinase p38-alpha/MAPK14 at Thr-203, Ser-253 and Thr-315.

It is found in the nucleus. The protein localises to the cytoplasm. The enzyme catalyses L-seryl-[protein] + ATP = O-phospho-L-seryl-[protein] + ADP + H(+). It carries out the reaction L-threonyl-[protein] + ATP = O-phospho-L-threonyl-[protein] + ADP + H(+). Activated following phosphorylation by p38-alpha/MAPK14 following various stresses. Inhibited by ligand 5B (2'-[2-(1,3-benzodioxol-5-yl)pyrimidin-4-yl]-5',6'-dihydrospiro[piperidine-4,7'-pyrrolo[3,2-c]pyridin]- 4'(1'h)-one) and ligand P4O (2-[2-(2-fluorophenyl)pyridin-4-yl]-1,5,6,7-tetrahydro- 4h-pyrrolo[3,2-c]pyridin-4-one), 2 ATP-competitive inhibitors. Stress-activated serine/threonine-protein kinase involved in cytokines production, endocytosis, cell migration, chromatin remodeling and transcriptional regulation. Following stress, it is phosphorylated and activated by MAP kinase p38-alpha/MAPK14, leading to phosphorylation of substrates. Phosphorylates serine in the peptide sequence, Hyd-X-R-X(2)-S, where Hyd is a large hydrophobic residue. MAPKAPK2 and MAPKAPK3, share the same function and substrate specificity, but MAPKAPK3 kinase activity and level in protein expression are lower compared to MAPKAPK2. Phosphorylates HSP27/HSPB1, KRT18, KRT20, RCSD1, RPS6KA3, TAB3 and TTP/ZFP36. Mediates phosphorylation of HSP27/HSPB1 in response to stress, leading to dissociate HSP27/HSPB1 from large small heat-shock protein (sHsps) oligomers and impair their chaperone activities and ability to protect against oxidative stress effectively. Involved in inflammatory response by regulating tumor necrosis factor (TNF) and IL6 production post-transcriptionally: acts by phosphorylating AU-rich elements (AREs)-binding proteins, such as TTP/ZFP36, leading to regulate the stability and translation of TNF and IL6 mRNAs. Phosphorylation of TTP/ZFP36, a major post-transcriptional regulator of TNF, promotes its binding to 14-3-3 proteins and reduces its ARE mRNA affinity leading to inhibition of dependent degradation of ARE-containing transcript. Involved in toll-like receptor signaling pathway (TLR) in dendritic cells: required for acute TLR-induced macropinocytosis by phosphorylating and activating RPS6KA3. Also acts as a modulator of Polycomb-mediated repression. The chain is MAP kinase-activated protein kinase 3 (Mapkapk3) from Rattus norvegicus (Rat).